Here is a 312-residue protein sequence, read N- to C-terminus: tRNA dimethylallyltransferase (312 aa).

11-18 is an ATP binding site; that stretch reads GPTAVGKT. A substrate-binding site is contributed by 13 to 18; the sequence is TAVGKT. Residues 159–163 form an interaction with substrate tRNA region; that stretch reads QRVLR.

The protein belongs to the IPP transferase family. Monomer. It depends on Mg(2+) as a cofactor.

The enzyme catalyses adenosine(37) in tRNA + dimethylallyl diphosphate = N(6)-dimethylallyladenosine(37) in tRNA + diphosphate. Its function is as follows. Catalyzes the transfer of a dimethylallyl group onto the adenine at position 37 in tRNAs that read codons beginning with uridine, leading to the formation of N6-(dimethylallyl)adenosine (i(6)A). The chain is tRNA dimethylallyltransferase from Macrococcus caseolyticus (strain JCSC5402) (Macrococcoides caseolyticum).